We begin with the raw amino-acid sequence, 350 residues long: Glycerol-1-phosphate dehydrogenase [NAD(P)+] (350 aa).

NAD(+)-binding positions include 97–101 (GSIID) and 119–122 (TTAS). Asp124 lines the substrate pocket. Residue Ser128 participates in NAD(+) binding. Asp171 serves as a coordination point for substrate. Zn(2+) contacts are provided by Asp171 and His251. His255 is a substrate binding site. A Zn(2+)-binding site is contributed by His267.

The protein belongs to the glycerol-1-phosphate dehydrogenase family. The cofactor is Zn(2+).

It localises to the cytoplasm. The catalysed reaction is sn-glycerol 1-phosphate + NAD(+) = dihydroxyacetone phosphate + NADH + H(+). It catalyses the reaction sn-glycerol 1-phosphate + NADP(+) = dihydroxyacetone phosphate + NADPH + H(+). It functions in the pathway membrane lipid metabolism; glycerophospholipid metabolism. Its function is as follows. Catalyzes the NAD(P)H-dependent reduction of dihydroxyacetonephosphate (DHAP or glycerone phosphate) to glycerol 1-phosphate (G1P). The G1P thus generated is used as the glycerophosphate backbone of phospholipids in the cellular membranes of Archaea. This is Glycerol-1-phosphate dehydrogenase [NAD(P)+] from Thermococcus sibiricus (strain DSM 12597 / MM 739).